The sequence spans 112 residues: UPF0102 protein Pmob_0702 (112 aa).

Belongs to the UPF0102 family.

In Petrotoga mobilis (strain DSM 10674 / SJ95), this protein is UPF0102 protein Pmob_0702.